The sequence spans 460 residues: GTPase Der (460 aa).

2 EngA-type G domains span residues 2 to 164 (QSII…HEEF) and 196 to 368 (IRVG…ENFT). Residues 8–15 (GKPNVGKS), 55–59 (DSGGL), 116–119 (NKVD), 202–209 (GRVNVGKS), 249–253 (DTAGI), and 313–316 (NKWD) contribute to the GTP site. In terms of domain architecture, KH-like spans 369–453 (QKIQTSKLNT…PLVIASRKKG (85 aa)).

It belongs to the TRAFAC class TrmE-Era-EngA-EngB-Septin-like GTPase superfamily. EngA (Der) GTPase family. In terms of assembly, associates with the 50S ribosomal subunit.

GTPase that plays an essential role in the late steps of ribosome biogenesis. The polypeptide is GTPase Der (Campylobacter jejuni subsp. jejuni serotype O:2 (strain ATCC 700819 / NCTC 11168)).